The following is a 315-amino-acid chain: Ribosomal RNA small subunit methyltransferase H (315 aa).

S-adenosyl-L-methionine is bound by residues 35–37 (GGH), D55, F79, D101, and Q108.

It belongs to the methyltransferase superfamily. RsmH family.

The protein resides in the cytoplasm. It catalyses the reaction cytidine(1402) in 16S rRNA + S-adenosyl-L-methionine = N(4)-methylcytidine(1402) in 16S rRNA + S-adenosyl-L-homocysteine + H(+). Functionally, specifically methylates the N4 position of cytidine in position 1402 (C1402) of 16S rRNA. This Sodalis glossinidius (strain morsitans) protein is Ribosomal RNA small subunit methyltransferase H.